The sequence spans 182 residues: ADP-ribosylation factor-like protein 3 (182 aa).

Gly-2 carries the N-myristoyl glycine lipid modification. Ser-5 carries the post-translational modification Phosphoserine. GTP-binding positions include 24 to 31, Thr-48, 67 to 71, Gly-70, 126 to 129, and 159 to 161; these read GLDNAGKT, DIGGQ, NKQD, and SAL. Residues Thr-31 and Thr-48 each coordinate Mg(2+).

It belongs to the small GTPase superfamily. Arf family. Found in a complex with ARL3, RP2 and UNC119 (or UNC119B); RP2 induces hydrolysis of GTP ARL3 in the complex, leading to the release of UNC119 (or UNC119B). Interacts with RP2; interaction is direct and stimulated with the activated GTP-bound form of ARL3. Interacts with SYS1. Interacts with ARL2BP; the GTP-bound form interacts with ARL2BP. Microtubule-associated protein. Does not interact with TBCC. Interacts with RP2. Interacts with PDE6D; the interaction occurs specifically with the GTP-bound form of ARL3. Interacts with GGA1; the interaction recruits PKD1:PKD2 complex to trans-Golgi network and is required for ciliary targeting of PKD1:PKD2 complex. Interacts with DNAAF9.

Its subcellular location is the golgi apparatus membrane. It localises to the cytoplasm. The protein resides in the cytoskeleton. It is found in the spindle. The protein localises to the nucleus. Its subcellular location is the microtubule organizing center. It localises to the centrosome. The protein resides in the cell projection. It is found in the cilium. Functionally, small GTP-binding protein which cycles between an inactive GDP-bound and an active GTP-bound form, and the rate of cycling is regulated by guanine nucleotide exchange factors (GEF) and GTPase-activating proteins (GAP). Required for normal cytokinesis and cilia signaling. Requires assistance from GTPase-activating proteins (GAPs) like RP2 and PDE6D, in order to cycle between inactive GDP-bound and active GTP-bound forms. Required for targeting proteins to the cilium, including myristoylated NPHP3 and prenylated INPP5E. Targets NPHP3 to the ciliary membrane by releasing myristoylated NPHP3 from UNC119B cargo adapter into the cilium. Required for PKD1:PKD2 complex targeting from the trans-Golgi network to the cilium. In Sus scrofa (Pig), this protein is ADP-ribosylation factor-like protein 3 (ARL3).